A 194-amino-acid chain; its full sequence is Xanthine phosphoribosyltransferase (194 aa).

2 residues coordinate xanthine: Leu20 and Asn27. 128–132 (ANGQA) serves as a coordination point for 5-phospho-alpha-D-ribose 1-diphosphate. Lys156 provides a ligand contact to xanthine.

It belongs to the purine/pyrimidine phosphoribosyltransferase family. Xpt subfamily. In terms of assembly, homodimer.

It is found in the cytoplasm. The enzyme catalyses XMP + diphosphate = xanthine + 5-phospho-alpha-D-ribose 1-diphosphate. The protein operates within purine metabolism; XMP biosynthesis via salvage pathway; XMP from xanthine: step 1/1. Its function is as follows. Converts the preformed base xanthine, a product of nucleic acid breakdown, to xanthosine 5'-monophosphate (XMP), so it can be reused for RNA or DNA synthesis. This chain is Xanthine phosphoribosyltransferase, found in Bacillus licheniformis (strain ATCC 14580 / DSM 13 / JCM 2505 / CCUG 7422 / NBRC 12200 / NCIMB 9375 / NCTC 10341 / NRRL NRS-1264 / Gibson 46).